The primary structure comprises 192 residues: Putative cyclic ADP-D-ribose synthase ThsB1 (192 aa).

It belongs to the Thoeris B TIR-like family. Monomer; not seen to interact with ThsA.

It localises to the cytoplasm. Activated upon phage infection. Its function is as follows. TIR-like domain-containing component of the Thoeris antiviral defense system, composed of ThsA and ThsB. Expression of ThsA and ThsB in B.subtilis (strain BEST7003) confers resistance to phages SBSphiC, SBSphiJ and SPO1. Phage infection activates this protein so that 30 to 45 minutes post-infection with phage SPO1 it generates a signal molecule that in turn activates the NAD(+) hydrolase activity of ThsA. The signal is similar to cyclic ADP-D-ribose, but how it differs is unknown. In vitro purified (but unactivated) ThsB has no NAD(+) hydrolyzing activity, no activity on AMP, CMP, GMP or UMP, does not alter the activity of ThsA, does not bind DNA. Hydrolyzes NAD(+) to make a cyclic ADP-D-ribose (cADPR) signaling molecule; might make 3'cADPR. The protein is Putative cyclic ADP-D-ribose synthase ThsB1 of Bacillus cereus (strain MSX-D12).